A 316-amino-acid chain; its full sequence is ATP synthase gamma chain (316 aa).

The protein belongs to the ATPase gamma chain family. F-type ATPases have 2 components, CF(1) - the catalytic core - and CF(0) - the membrane proton channel. CF(1) has five subunits: alpha(3), beta(3), gamma(1), delta(1), epsilon(1). CF(0) has three main subunits: a, b and c.

Its subcellular location is the cellular thylakoid membrane. In terms of biological role, produces ATP from ADP in the presence of a proton gradient across the membrane. The gamma chain is believed to be important in regulating ATPase activity and the flow of protons through the CF(0) complex. The polypeptide is ATP synthase gamma chain (Prochlorococcus marinus (strain MIT 9515)).